The chain runs to 1009 residues: Epididymis-specific alpha-mannosidase (1009 aa).

The N-terminal stretch at 1–23 (MGQLCWLPLLAPLLLLRPPGVQS) is a signal peptide. Zn(2+) is bound by residues histidine 36, aspartate 38, and aspartate 151. Catalysis depends on aspartate 151, which acts as the Nucleophile. N-linked (GlcNAc...) asparagine glycans are attached at residues asparagine 226, asparagine 249, asparagine 294, and asparagine 336. Histidine 420 contacts Zn(2+). N-linked (GlcNAc...) asparagine glycosylation is found at asparagine 516, asparagine 608, asparagine 670, asparagine 675, asparagine 748, asparagine 808, asparagine 812, and asparagine 890. The tract at residues 972–991 (GPGRHRGDTTSPSRPPGGPI) is disordered.

It belongs to the glycosyl hydrolase 38 family. It depends on Zn(2+) as a cofactor.

The protein resides in the secreted. The enzyme catalyses Hydrolysis of terminal, non-reducing alpha-D-mannose residues in alpha-D-mannosides.. The polypeptide is Epididymis-specific alpha-mannosidase (MAN2B2) (Homo sapiens (Human)).